A 247-amino-acid chain; its full sequence is Putative ankyrin repeat protein RBE_1110 (247 aa).

ANK repeat units lie at residues 105-135 (QNKD…CIDY) and 139-171 (EGHN…KLIT).

In Rickettsia bellii (strain RML369-C), this protein is Putative ankyrin repeat protein RBE_1110.